The following is a 146-amino-acid chain: Snake venom vascular endothelial growth factor toxin (146 aa).

The first 24 residues, 1–24, serve as a signal peptide directing secretion; that stretch reads MAVYLLAVAILFCIQGWPLGTVQG. Gln-25 carries the pyrrolidone carboxylic acid modification. Disulfide bonds link Cys-38–Cys-80, Cys-69–Cys-115, and Cys-73–Cys-117. Residues 118-146 form a disordered region; the sequence is RPRSASGVNSRKHKRNPEEGEPRAKFPFV. The span at 133 to 146 shows a compositional bias: basic and acidic residues; it reads NPEEGEPRAKFPFV.

This sequence belongs to the PDGF/VEGF growth factor family. Snake venom VEGF subfamily. Homodimer; disulfide-linked. Interacts with VEGF receptor-1 (FLT1) with a high affinity, whereas it binds to VEGF receptor-2 (KDR) with a low affinity. Does not bind VEGF receptor-3 (FLT4). As to expression, expressed by the venom gland.

The protein resides in the secreted. Functionally, snake venom VEGFs that may contribute to venom dispersion and prey subjugation by inducing vascular permeability and hypotension. This protein induces an increase in capillary permeability after intradermal injection, as well as a drastic hypotensive effect after intravenous injection. The hypotension is mediated by nitric oxide (NO), which is produced by VEGF-activated endothelium NO synthase. Also induces angiogenesis in vitro. Like other crotalid VEGFs, this protein interacts with VEGF receptor-1 (FLT1) with a high affinity, whereas it binds to VEGF receptor-2 (KDR) with a low affinity. The sequence is that of Snake venom vascular endothelial growth factor toxin from Bothrops jararaca (Jararaca).